We begin with the raw amino-acid sequence, 523 residues long: MAPSNTERALPVLAIWAAIGLAYWIDSQKKKKHHLPPGPKKLPIIGNVMDLPAKIEWETYARWGKEYNSDIIQVSAVGTSIVILNSANAANDLLLKRSAIYSSRPHSTMHHELSGWGFTWALMPYGESWRAGRRSFTKHFNSSNPGINQPRELRYVKRFLKQLYEKPNDVLDHVRNLVGSTTLSMTYGLETEPYNDPYVELVEKAVLAASEIMTSGAFLVDIIPAMKHIPPWVPGTIFHQKAALMRGHAYYVREQPFKVAQEMIKTGDYEPSFVSDALRDLENSETPEEDLEHLKDVAGQVYIAGADTTASALGTFFLAMVCFPEVQKKAQQELDSVLNGRLPEHADFPSFPYLNAVIKEVYRWRPVTPMGVPHQTIADDVYRDYHIPKGSIVFANQWAMSNDENDYPQPGEFRPERYLTEDGKPNKAVRDPFDIAFGFGRRICAGRYLAHSTITLAAASVLSLFDLLKAVDENGKEIEPTREYHQAMISRPLEFPCRIKPRNKEAEEVIRACPLTFTKPTSA.

The helical transmembrane segment at 9–29 (ALPVLAIWAAIGLAYWIDSQK) threads the bilayer. Residue N141 is glycosylated (N-linked (GlcNAc...) asparagine). Heme is bound at residue C444.

It belongs to the cytochrome P450 family. Heme is required as a cofactor.

It localises to the membrane. The protein operates within secondary metabolite biosynthesis; terpenoid biosynthesis. Its function is as follows. Cytochrome P450 monooxygenase; part of the gene cluster that mediates the biosynthesis of pleuromutilin, a tricyclic diterpene showing antibacterial properties. The geranylgeranyl diphosphate (GGPP) synthase ple4 catalyzes the first step in pleuromutilin biosynthesis. GGPP is then substrate of the premutilin synthase (PS) ple3 to yield premutilin. Premutilin synthase is a bifunctional enzyme composed of the fusion of a class II diterpene cyclase (DTC) and a class I diterpene synthase (DTS), with the corresponding domains and active sites containing characteristic aspartate-rich motifs. GGPP is first converted to mutildienyl-diphosphate (MPP) at the class II DTC site. MPP is subsequently further cyclized at the class I DTS site, followed by a 1,5-hydride shift and addition of water prior to terminating deprotonation, to yield premutilin. The cytochrome P450 monooxygenases ple5 and ple6 hydroxylate premutilin at C-11 and C-3, respectively, producing 11-hydroxypremutilin and 3-hydroxypremutilin. The combination of the actions of both ple5 and ple6 leads to the production of 3,11-dihydroxypremutilin. The short chain dehydrogenase ple7 further converts 3,11-dihydroxypremutilin into mutilin. The acetyltransferase ple2 then acetylates mutilin to produce 14-O-acetylmutilin. Finally, the cytochrome P450 monooxygenase ple1 catalyzes hydroxylation on the alpha position of the acetyl side chain of 14-O-acetylmutilin to yield pleuromutilin. This Rhodocybe pseudopiperita (Clitopilus pseudopiperitus) protein is Cytochrome P450 monooxygenase ple1.